The chain runs to 171 residues: MTKWFNVGKIVNTHGVKGEIRVVSRTDFPEERYKVGNTLYISNEKGGEPFPVKITSHRQHKTFDLLTFEGYGNVNEVEQFKGSLLKVPEDQLGELAEGEYYYHEIIGCNVVTEEGEALGTIKEVLSPGANDVWVIKRPKGQDLLIPYIDDVVLQVNIENKLVTIHVMEGLL.

The 74-residue stretch at 97-170 (EGEYYYHEII…LVTIHVMEGL (74 aa)) folds into the PRC barrel domain.

It belongs to the RimM family. Binds ribosomal protein uS19.

The protein localises to the cytoplasm. Its function is as follows. An accessory protein needed during the final step in the assembly of 30S ribosomal subunit, possibly for assembly of the head region. Essential for efficient processing of 16S rRNA. May be needed both before and after RbfA during the maturation of 16S rRNA. It has affinity for free ribosomal 30S subunits but not for 70S ribosomes. The protein is Ribosome maturation factor RimM of Bacillus thuringiensis (strain Al Hakam).